The following is a 241-amino-acid chain: ATP phosphoribosyltransferase (241 aa).

Belongs to the ATP phosphoribosyltransferase family. Short subfamily. As to quaternary structure, heteromultimer composed of HisG and HisZ subunits.

The protein localises to the cytoplasm. The enzyme catalyses 1-(5-phospho-beta-D-ribosyl)-ATP + diphosphate = 5-phospho-alpha-D-ribose 1-diphosphate + ATP. Its pathway is amino-acid biosynthesis; L-histidine biosynthesis; L-histidine from 5-phospho-alpha-D-ribose 1-diphosphate: step 1/9. Functionally, catalyzes the condensation of ATP and 5-phosphoribose 1-diphosphate to form N'-(5'-phosphoribosyl)-ATP (PR-ATP). Has a crucial role in the pathway because the rate of histidine biosynthesis seems to be controlled primarily by regulation of HisG enzymatic activity. The sequence is that of ATP phosphoribosyltransferase from Gluconobacter oxydans (strain 621H) (Gluconobacter suboxydans).